The sequence spans 215 residues: Adenylate kinase (215 aa).

10-15 is a binding site for ATP; it reads GAGKGT. Residues 30–59 are NMP; that stretch reads STGDMLRAAVKAGTELGLKAKSVMDSGGLV. Residues threonine 31, arginine 36, 57 to 59, 85 to 88, and glutamine 92 each bind AMP; these read GLV and GFPR. An LID region spans residues 122–159; it reads GRRVHEASGRVYHTVYNPPKIAGKDDITGEDLVQRKDD. ATP is bound by residues arginine 123 and 132–133; that span reads VY. AMP is bound by residues arginine 156 and arginine 167. Glycine 201 provides a ligand contact to ATP.

This sequence belongs to the adenylate kinase family. In terms of assembly, monomer.

Its subcellular location is the cytoplasm. The enzyme catalyses AMP + ATP = 2 ADP. It functions in the pathway purine metabolism; AMP biosynthesis via salvage pathway; AMP from ADP: step 1/1. Catalyzes the reversible transfer of the terminal phosphate group between ATP and AMP. Plays an important role in cellular energy homeostasis and in adenine nucleotide metabolism. This Pseudomonas fluorescens (strain ATCC BAA-477 / NRRL B-23932 / Pf-5) protein is Adenylate kinase.